Reading from the N-terminus, the 402-residue chain is Plasminogen activator inhibitor 1 (402 aa).

The N-terminal stretch at 1 to 23 (MQMSPALTCLVLGLALVFGEGSA) is a signal peptide. N-linked (GlcNAc...) asparagine glycosylation is found at asparagine 232, asparagine 288, and asparagine 352.

Belongs to the serpin family. In terms of assembly, forms a heterodimer with TMPRSS7. Interacts with VTN. Binds LRP1B; binding is followed by internalization and degradation. Interacts with PPP1CB. In complex with PLAU/uPA, interacts with PLAUR/uPAR. Interacts with SORL1 and LRP1, either alone or in complex with PLAU; these interactions are abolished in the presence of LRPAP1/RAP. The ternary complex composed of PLAUR-PLAU-PAI1 also interacts with SORL1. Interacts with PLAT/tPA. Also interacts with SORL1, when complexed to PLAT/tPA. Post-translationally, inactivated by proteolytic attack of the urokinase-type (u-PA) and the tissue-type (TPA), cleaving the 369-Arg-|-Met-370 bond. As to expression, expressed in endothelial cells. Found in plasma, platelets, and hepatoma and fibrosarcoma cells.

It localises to the secreted. Its function is as follows. Serine protease inhibitor. Inhibits TMPRSS7. Is a primary inhibitor of tissue-type plasminogen activator (PLAT) and urokinase-type plasminogen activator (PLAU). As PLAT inhibitor, it is required for fibrinolysis down-regulation and is responsible for the controlled degradation of blood clots. As PLAU inhibitor, it is involved in the regulation of cell adhesion and spreading. Acts as a regulator of cell migration, independently of its role as protease inhibitor. It is required for stimulation of keratinocyte migration during cutaneous injury repair. It is involved in cellular and replicative senescence. Plays a role in alveolar type 2 cells senescence in the lung. Is involved in the regulation of cementogenic differentiation of periodontal ligament stem cells, and regulates odontoblast differentiation and dentin formation during odontogenesis. The sequence is that of Plasminogen activator inhibitor 1 (SERPINE1) from Homo sapiens (Human).